The chain runs to 229 residues: Lipoprotein-releasing system ATP-binding protein LolD (229 aa).

The region spanning 9-229 (LRLEQVARRY…TIREGQIVPA (221 aa)) is the ABC transporter domain. 45-52 (APSGTGKS) provides a ligand contact to ATP.

The protein belongs to the ABC transporter superfamily. Lipoprotein translocase (TC 3.A.1.125) family. As to quaternary structure, the complex is composed of two ATP-binding proteins (LolD) and two transmembrane proteins (LolC and LolE).

The protein resides in the cell inner membrane. Functionally, part of the ABC transporter complex LolCDE involved in the translocation of mature outer membrane-directed lipoproteins, from the inner membrane to the periplasmic chaperone, LolA. Responsible for the formation of the LolA-lipoprotein complex in an ATP-dependent manner. The polypeptide is Lipoprotein-releasing system ATP-binding protein LolD (Granulibacter bethesdensis (strain ATCC BAA-1260 / CGDNIH1)).